The following is a 37-amino-acid chain: Lambda-hexatoxin-Hv1c (37 aa).

Cystine bridges form between Cys-3/Cys-17, Cys-10/Cys-22, Cys-13/Cys-14, and Cys-16/Cys-32.

Belongs to the neurotoxin 11 (kappa toxin) family. Expressed by the venom gland.

It is found in the secreted. Its function is as follows. This excitatory toxin inhibits insect calcium-activated potassium (KCa) channels (Slo-type). Pan-neuronal expression in Drosophila is lethal but flies engineered to express the toxin only in clock neurons have defects in circadian rhythm but a normal lifespan. The chain is Lambda-hexatoxin-Hv1c from Hadronyche versuta (Blue mountains funnel-web spider).